The following is a 537-amino-acid chain: Oocyte zinc finger protein XlCOF29 (537 aa).

The segment at Met-1–Glu-21 is disordered. C2H2-type zinc fingers lie at residues Phe-375–His-397, Phe-403–His-425, Phe-431–His-453, Tyr-459–His-481, Tyr-487–His-509, and Phe-515–His-537.

This sequence belongs to the krueppel C2H2-type zinc-finger protein family.

Its subcellular location is the nucleus. Its function is as follows. May be involved in transcriptional regulation. The sequence is that of Oocyte zinc finger protein XlCOF29 from Xenopus laevis (African clawed frog).